The following is a 426-amino-acid chain: Serine hydroxymethyltransferase (426 aa).

Residues leucine 111 and 115 to 117 (GHL) each bind (6S)-5,6,7,8-tetrahydrofolate. Lysine 220 carries the post-translational modification N6-(pyridoxal phosphate)lysine.

It belongs to the SHMT family. As to quaternary structure, homodimer. Requires pyridoxal 5'-phosphate as cofactor.

It is found in the cytoplasm. It carries out the reaction (6R)-5,10-methylene-5,6,7,8-tetrahydrofolate + glycine + H2O = (6S)-5,6,7,8-tetrahydrofolate + L-serine. Its pathway is one-carbon metabolism; tetrahydrofolate interconversion. It functions in the pathway amino-acid biosynthesis; glycine biosynthesis; glycine from L-serine: step 1/1. Functionally, catalyzes the reversible interconversion of serine and glycine with tetrahydrofolate (THF) serving as the one-carbon carrier. This reaction serves as the major source of one-carbon groups required for the biosynthesis of purines, thymidylate, methionine, and other important biomolecules. Also exhibits THF-independent aldolase activity toward beta-hydroxyamino acids, producing glycine and aldehydes, via a retro-aldol mechanism. This chain is Serine hydroxymethyltransferase, found in Orientia tsutsugamushi (strain Ikeda) (Rickettsia tsutsugamushi).